Consider the following 103-residue polypeptide: Large ribosomal subunit protein eL14 (103 aa).

This sequence belongs to the eukaryotic ribosomal protein eL14 family.

The polypeptide is Large ribosomal subunit protein eL14 (Ignicoccus hospitalis (strain KIN4/I / DSM 18386 / JCM 14125)).